The following is a 377-amino-acid chain: Chorismate synthase (377 aa).

Arg47 lines the NADP(+) pocket. Residues 124–126, 252–253, Gly296, 311–315, and Arg338 contribute to the FMN site; these read RSS, NS, and KPTPS.

It belongs to the chorismate synthase family. It depends on FMNH2 as a cofactor.

It carries out the reaction 5-O-(1-carboxyvinyl)-3-phosphoshikimate = chorismate + phosphate. It participates in metabolic intermediate biosynthesis; chorismate biosynthesis; chorismate from D-erythrose 4-phosphate and phosphoenolpyruvate: step 7/7. In terms of biological role, catalyzes the anti-1,4-elimination of the C-3 phosphate and the C-6 proR hydrogen from 5-enolpyruvylshikimate-3-phosphate (EPSP) to yield chorismate, which is the branch point compound that serves as the starting substrate for the three terminal pathways of aromatic amino acid biosynthesis. This reaction introduces a second double bond into the aromatic ring system. This is Chorismate synthase from Methanococcus vannielii (strain ATCC 35089 / DSM 1224 / JCM 13029 / OCM 148 / SB).